A 187-amino-acid polypeptide reads, in one-letter code: MIILGIDEAGRGPLSGPVVAAGVILDQDKIIDGLADSKKLTEKKRQSLYQQIITHAKAYTIVEINPQQIDELNILQATLKAMHQVANNLERQFDKVLVDGNKLPNWDYNSEAIVKGDSKIIEISAASILAKVHRDNICLEHDRLYPQYGFAKHKGYPTKEHLENIKKYGVLDIHRKSYKPVQVLLNE.

The 187-residue stretch at 1–187 (MIILGIDEAG…YKPVQVLLNE (187 aa)) folds into the RNase H type-2 domain. A divalent metal cation is bound by residues aspartate 7, glutamate 8, and aspartate 99.

This sequence belongs to the RNase HII family. Mn(2+) is required as a cofactor. It depends on Mg(2+) as a cofactor.

Its subcellular location is the cytoplasm. The catalysed reaction is Endonucleolytic cleavage to 5'-phosphomonoester.. Endonuclease that specifically degrades the RNA of RNA-DNA hybrids. This chain is Ribonuclease HII, found in Francisella tularensis subsp. mediasiatica (strain FSC147).